Here is a 108-residue protein sequence, read N- to C-terminus: Large ribosomal subunit protein uL23 (108 aa).

Belongs to the universal ribosomal protein uL23 family. In terms of assembly, part of the 50S ribosomal subunit. Contacts protein L29, and trigger factor when it is bound to the ribosome.

Functionally, one of the early assembly proteins it binds 23S rRNA. One of the proteins that surrounds the polypeptide exit tunnel on the outside of the ribosome. Forms the main docking site for trigger factor binding to the ribosome. This chain is Large ribosomal subunit protein uL23, found in Polaromonas naphthalenivorans (strain CJ2).